The following is a 256-amino-acid chain: uncharacterized protein (256 aa).

Valine 9–isoleucine 33 contributes to the NADP(+) binding site. Serine 140 contacts substrate. Tyrosine 153 serves as the catalytic Proton acceptor.

Belongs to the short-chain dehydrogenases/reductases (SDR) family.

This is an uncharacterized protein from Thermotoga maritima (strain ATCC 43589 / DSM 3109 / JCM 10099 / NBRC 100826 / MSB8).